We begin with the raw amino-acid sequence, 591 residues long: Autotransporter adhesin NhhA (591 aa).

The N-terminal stretch at methionine 1–alanine 51 is a signal peptide. Residues asparagine 52–alanine 503 are surface exposed passenger domain. The tract at residues glutamine 504–tryptophan 591 is translocator domain. Transmembrane regions (beta stranded) follow at residues glycine 537 to threonine 547, glutamate 551 to isoleucine 561, lysine 570 to asparagine 576, and histidine 580 to tryptophan 591.

This sequence belongs to the autotransporter-2 (AT-2) (TC 1.B.40) family. In terms of assembly, homotrimer.

It is found in the cell surface. The protein resides in the cell outer membrane. Involved in adhesion of capsulated meningococci to host epithelial cells. Interacts with laminin and heparan sulfate, promoting the adherence to the extracellular matrix (ECM) components. This is Autotransporter adhesin NhhA from Neisseria meningitidis serogroup B (strain ATCC BAA-335 / MC58).